The following is a 2381-amino-acid chain: Highly reducing polyketide synthase virA (2381 aa).

One can recognise a Ketosynthase family 3 (KS3) domain in the interval 1–420 (MDALHLACHL…GANGHVILES (420 aa)). Residues C171, H306, and H344 each act as for beta-ketoacyl synthase activity in the active site. A malonyl-CoA:ACP transacylase (MAT) domain region spans residues 535–851 (VFTGQGAQYA…PYSPTLVRKE (317 aa)). Catalysis depends on S629, which acts as the For malonyltransferase activity. The tract at residues 920–1064 (HELLGTRATA…GSIRVMESTL (145 aa)) is N-terminal hotdog fold. Residues 920 to 1232 (HELLGTRATA…HLRMNEYTGK (313 aa)) are dehydratase (DH) domain. The region spanning 920–1235 (HELLGTRATA…MNEYTGKAPV (316 aa)) is the PKS/mFAS DH domain. Catalysis depends on H952, which acts as the Proton acceptor; for dehydratase activity. The tract at residues 1078–1235 (HEVWGMSRWY…MNEYTGKAPV (158 aa)) is C-terminal hotdog fold. The Proton donor; for dehydratase activity role is filled by D1144. Positions 1639-1956 (GMTDTIHFQQ…NKDRVGKVVV (318 aa)) are enoyl reductase (ER) domain. A ketoreductase (KR) domain region spans residues 1981-2159 (TYLLVGCLGG…AVSVGLGMIS (179 aa)). Residues 2297 to 2375 (TMLDAILRLT…TLAEFIEEKL (79 aa)) enclose the Carrier domain. Position 2334 is an O-(pantetheine 4'-phosphoryl)serine (S2334).

The protein operates within secondary metabolite biosynthesis. Highly reducing polyketide synthase; part of the gene cluster that mediates the biosynthesis of virensols and trichoxide, fungal natural products that contain or are derived from a salicylaldehyde core. The pathway begins with the synthesis of the reduced chain in virensol C by the highly reducing polyketide synthase virA via condensation of one acetate and 8 malonate units. VirA has interesting programming rules since the first 2 ketides are fully reduced, the 3 following ketides undergo beta-dehydration, and the last 3 ketides are only reduced to beta-hydroxys to yield the trihydroxy portion. The production of aldehyde virensol C by virA alone is surprising, since virA does not contain a reductase (R) domain that is typically associated with reductive product release in HRPKS. The cupin-domain enzyme virC is involved in enhancing virA product turnover. The short-chain dehydrogenase virB then oxidizes the C-7 alcohol of virensol C to a ketone, yielding virensol D. Virensol D is further transformed to salicylaldehyde 5-deoxyaurocitrin by the short-chain dehydrogenase virD. VirD catalyzes the dehydrogenation of C-3 to form the beta-ketone aldehyde, which is followed by the generation of the nucleophilic C-2 that is required for the intramolecular aldol condensation between C-2 and C-7, itself followed by dehydration and aromatization which leads to salicylaldehyde 5-deoxyaurocitrin. While the dehydrogenation of virensol D is definitely catalyzed by virD, the aldol condensation and dehydration may be uncatalyzed or assisted by virD. The short chain dehydrogenase virG then converts salicylaldehyde 5-deoxyaurocitrin into virensol B which is further hydroxylated by the cytochrome P450 monooxygenase virE to yield the hydroquinone virensol A. VirI then may oxidize virensol A to form the quinone, while virH performs the epoxidation. Finally, the two remaining short-chain dehydrogenases, virK and virL, are probably responsible for reducing the ketones to the corresponding alcohols to furnish the epoxycyclohexanol structure in trichoxide. This chain is Highly reducing polyketide synthase virA, found in Hypocrea virens (strain Gv29-8 / FGSC 10586) (Gliocladium virens).